The sequence spans 502 residues: Arginine decarboxylase (502 aa).

Lys-42 carries the N6-(pyridoxal phosphate)lysine modification. 226-236 is a substrate binding site; sequence IDIGGGLGIDY.

Belongs to the Orn/Lys/Arg decarboxylase class-II family. SpeA subfamily. Pyridoxal 5'-phosphate is required as a cofactor. Mg(2+) serves as cofactor.

The enzyme catalyses L-arginine + H(+) = agmatine + CO2. The protein operates within amine and polyamine biosynthesis; agmatine biosynthesis; agmatine from L-arginine: step 1/1. The chain is Arginine decarboxylase from Solanum lycopersicum (Tomato).